The sequence spans 703 residues: Methionine--tRNA ligase (703 aa).

A 'HIGH' region motif is present at residues 12 to 22 (PYANGPLHIGH). Zn(2+) contacts are provided by cysteine 143, cysteine 146, cysteine 156, and cysteine 159. A 'KMSKS' region motif is present at residues 331–335 (KMSKT). ATP is bound at residue lysine 334. 2 stretches are compositionally biased toward low complexity: residues 556-568 (AAPQ…PAKG) and 577-594 (EAPA…AAES). Disordered stretches follow at residues 556 to 594 (AAPQ…AAES) and 682 to 703 (GPGG…SEVK). The tRNA-binding domain occupies 602–703 (DFAKVVLKAG…GDVAPGSEVK (102 aa)).

It belongs to the class-I aminoacyl-tRNA synthetase family. MetG type 1 subfamily. Homodimer. Zn(2+) is required as a cofactor.

The protein resides in the cytoplasm. The enzyme catalyses tRNA(Met) + L-methionine + ATP = L-methionyl-tRNA(Met) + AMP + diphosphate. In terms of biological role, is required not only for elongation of protein synthesis but also for the initiation of all mRNA translation through initiator tRNA(fMet) aminoacylation. In Myxococcus xanthus (strain DK1622), this protein is Methionine--tRNA ligase.